We begin with the raw amino-acid sequence, 556 residues long: Oxygen-dependent choline dehydrogenase (556 aa).

4 to 33 (DYIIIGAGSAGNVLATRLTEDPNTTVLLLE) serves as a coordination point for FAD. The active-site Proton acceptor is the H473.

This sequence belongs to the GMC oxidoreductase family. FAD serves as cofactor.

It catalyses the reaction choline + A = betaine aldehyde + AH2. It carries out the reaction betaine aldehyde + NAD(+) + H2O = glycine betaine + NADH + 2 H(+). It participates in amine and polyamine biosynthesis; betaine biosynthesis via choline pathway; betaine aldehyde from choline (cytochrome c reductase route): step 1/1. Its function is as follows. Involved in the biosynthesis of the osmoprotectant glycine betaine. Catalyzes the oxidation of choline to betaine aldehyde and betaine aldehyde to glycine betaine at the same rate. This is Oxygen-dependent choline dehydrogenase from Escherichia coli O127:H6 (strain E2348/69 / EPEC).